Reading from the N-terminus, the 20-residue chain is Malate dehydrogenase (20 aa).

11–17 contributes to the NAD(+) binding site; that stretch reads GAAGQIG.

The protein belongs to the LDH/MDH superfamily. MDH type 2 family.

The enzyme catalyses (S)-malate + NAD(+) = oxaloacetate + NADH + H(+). Its function is as follows. Catalyzes the reversible oxidation of malate to oxaloacetate. This Kibdelosporangium aridum protein is Malate dehydrogenase (mdh).